A 353-amino-acid polypeptide reads, in one-letter code: Glycerol-3-phosphate dehydrogenase [NAD(P)+] (353 aa).

Residues tryptophan 11, arginine 40, and lysine 115 each coordinate NADPH. 3 residues coordinate sn-glycerol 3-phosphate: lysine 115, glycine 156, and serine 158. Alanine 160 provides a ligand contact to NADPH. The sn-glycerol 3-phosphate site is built by lysine 211, aspartate 264, serine 274, arginine 275, and asparagine 276. The active-site Proton acceptor is lysine 211. Arginine 275 serves as a coordination point for NADPH. The NADPH site is built by valine 299 and glutamate 301.

Belongs to the NAD-dependent glycerol-3-phosphate dehydrogenase family.

The protein resides in the cytoplasm. It carries out the reaction sn-glycerol 3-phosphate + NAD(+) = dihydroxyacetone phosphate + NADH + H(+). It catalyses the reaction sn-glycerol 3-phosphate + NADP(+) = dihydroxyacetone phosphate + NADPH + H(+). Its pathway is membrane lipid metabolism; glycerophospholipid metabolism. Functionally, catalyzes the reduction of the glycolytic intermediate dihydroxyacetone phosphate (DHAP) to sn-glycerol 3-phosphate (G3P), the key precursor for phospholipid synthesis. This chain is Glycerol-3-phosphate dehydrogenase [NAD(P)+], found in Polaromonas sp. (strain JS666 / ATCC BAA-500).